The chain runs to 710 residues: Polyribonucleotide nucleotidyltransferase (710 aa).

Mg(2+) contacts are provided by Asp486 and Asp492. The KH domain maps to 553-612 (PRIHTIKISVDKIKDVIGKGGSVIRALTEETGTTIEIEDDGTVKIAATDGDKAKFAIRRI). One can recognise an S1 motif domain in the interval 622–690 (GRIYNGKVTR…RQGRVRLSIK (69 aa)). Positions 690-710 (KEAGEQAQPEAEAVPAAPEAE) are disordered. Residues 694–710 (EQAQPEAEAVPAAPEAE) are compositionally biased toward low complexity.

This sequence belongs to the polyribonucleotide nucleotidyltransferase family. In terms of assembly, component of the RNA degradosome, which is a multiprotein complex involved in RNA processing and mRNA degradation. The cofactor is Mg(2+).

It is found in the cytoplasm. It carries out the reaction RNA(n+1) + phosphate = RNA(n) + a ribonucleoside 5'-diphosphate. Its function is as follows. Involved in mRNA degradation. Catalyzes the phosphorolysis of single-stranded polyribonucleotides processively in the 3'- to 5'-direction. This is Polyribonucleotide nucleotidyltransferase from Erwinia tasmaniensis (strain DSM 17950 / CFBP 7177 / CIP 109463 / NCPPB 4357 / Et1/99).